Consider the following 1004-residue polypeptide: 2-oxoglutarate dehydrogenase E1 component (1004 aa).

The protein belongs to the alpha-ketoglutarate dehydrogenase family. Homodimer. Part of the 2-oxoglutarate dehydrogenase (OGDH) complex composed of E1 (2-oxoglutarate dehydrogenase), E2 (dihydrolipoamide succinyltransferase) and E3 (dihydrolipoamide dehydrogenase); the complex contains multiple copies of the three enzymatic components (E1, E2 and E3). Thiamine diphosphate is required as a cofactor.

The enzyme catalyses N(6)-[(R)-lipoyl]-L-lysyl-[protein] + 2-oxoglutarate + H(+) = N(6)-[(R)-S(8)-succinyldihydrolipoyl]-L-lysyl-[protein] + CO2. Functionally, E1 component of the 2-oxoglutarate dehydrogenase (OGDH) complex which catalyzes the decarboxylation of 2-oxoglutarate, the first step in the conversion of 2-oxoglutarate to succinyl-CoA and CO(2). The chain is 2-oxoglutarate dehydrogenase E1 component from Brucella ovis (strain ATCC 25840 / 63/290 / NCTC 10512).